The primary structure comprises 385 residues: MNENREQVLKNVKRVLIKIGSAVLTGDNGLDLERIQHLVDQMAALTHRGYQVVMVTSGAIASGKHRLGITTALKSIPQKQAAAAIGQGRLMRIYSNSFGKHGLYVGQILLTMSDLTDRRRFLNIRNTLSTLMEWGIIAIINENDTVAIDEIKFGDNDNLAAMIANIIEAHLVINLTSTPGLYDRNPASSRNARLIPLVREITEDIEAAASEEGTSVGTGGMKSKVMAAKKVTAFGIPYIIAPGKQKDVLLDIFDGNELGTLFLPMREHLSSRKYWIAFTLRSRGVLSIDAGARTAILEEGKSLLPSGIVGVEGDFIVGDPVTCVDRDGVPLAKGLVNYSAPDIRKIMGLKTSRIEQVLGHKDYDEIIHRDNLAVIRRSRRHREAG.

Lys18 serves as a coordination point for ATP. The substrate site is built by Ser57, Asp144, and Asn156. Residue Thr218–Lys224 coordinates ATP. In terms of domain architecture, PUA spans Arg283–Lys361.

Belongs to the glutamate 5-kinase family.

It localises to the cytoplasm. It catalyses the reaction L-glutamate + ATP = L-glutamyl 5-phosphate + ADP. The protein operates within amino-acid biosynthesis; L-proline biosynthesis; L-glutamate 5-semialdehyde from L-glutamate: step 1/2. Its function is as follows. Catalyzes the transfer of a phosphate group to glutamate to form L-glutamate 5-phosphate. This Syntrophus aciditrophicus (strain SB) protein is Glutamate 5-kinase.